We begin with the raw amino-acid sequence, 362 residues long: MLQVNVELKHHHYPIKIGQGLLTNPQSYAPLKAGDNVMIVSNPTIAQYYLATVRDTLITIGCKVDTVLLADGEQYKTFESLNQIFTALLENDHHRDTTLVALGGGVIGDVTGYAAASYQRGVRFIQIPTTLLAQIDSSIGGKTAINHPLGKNMIGAFYQPAAVIIDTQVLNTLAKRQVSAGLAEVIKYGVAFDSHFFEWLEQHIDQLMQLDPETLAHCIQRCCQLKAAIVAQDETEQGERALLNFGHTFGHSIEAHLGYGTWLHGESVAVGMLEAAELSKILGNLTEDQLARLEKLLANAVLPTTSPDGMTADQYLPYMWRDKKVLNGQLRLVLLKSFGQAYITTEATEQQILTAIQRFTQH.

NAD(+)-binding positions include 71–76, 105–109, 129–130, Lys142, and Lys151; these read DGEQYK, GVIGD, and TT. Glu184, His247, and His264 together coordinate Zn(2+).

Belongs to the sugar phosphate cyclases superfamily. Dehydroquinate synthase family. NAD(+) is required as a cofactor. Requires Co(2+) as cofactor. Zn(2+) serves as cofactor.

The protein resides in the cytoplasm. The catalysed reaction is 7-phospho-2-dehydro-3-deoxy-D-arabino-heptonate = 3-dehydroquinate + phosphate. It participates in metabolic intermediate biosynthesis; chorismate biosynthesis; chorismate from D-erythrose 4-phosphate and phosphoenolpyruvate: step 2/7. Its function is as follows. Catalyzes the conversion of 3-deoxy-D-arabino-heptulosonate 7-phosphate (DAHP) to dehydroquinate (DHQ). The chain is 3-dehydroquinate synthase from Haemophilus ducreyi (strain 35000HP / ATCC 700724).